The chain runs to 234 residues: Sugar fermentation stimulation protein homolog (234 aa).

It belongs to the SfsA family.

The chain is Sugar fermentation stimulation protein homolog from Shewanella sp. (strain ANA-3).